The primary structure comprises 242 residues: Protein GrpE (242 aa).

Disordered regions lie at residues 1 to 75 (MSDD…DDEL) and 93 to 136 (VADL…QQIK). Residues 23–37 (DAESSAAEDASAADD) show a composition bias toward low complexity. Residues 38-49 (AAPEESTGDEQA) show a composition bias toward acidic residues. Residues 50–64 (GETTAESSDAESVTV) show a composition bias toward polar residues. Residues 96–108 (LETERDEAEETAS) show a composition bias toward acidic residues. The segment covering 124–133 (YKKRAKKRQQ) has biased composition (basic residues).

Belongs to the GrpE family. As to quaternary structure, homodimer.

The protein localises to the cytoplasm. Its function is as follows. Participates actively in the response to hyperosmotic and heat shock by preventing the aggregation of stress-denatured proteins, in association with DnaK and GrpE. It is the nucleotide exchange factor for DnaK and may function as a thermosensor. Unfolded proteins bind initially to DnaJ; upon interaction with the DnaJ-bound protein, DnaK hydrolyzes its bound ATP, resulting in the formation of a stable complex. GrpE releases ADP from DnaK; ATP binding to DnaK triggers the release of the substrate protein, thus completing the reaction cycle. Several rounds of ATP-dependent interactions between DnaJ, DnaK and GrpE are required for fully efficient folding. This chain is Protein GrpE, found in Haloferax mediterranei (strain ATCC 33500 / DSM 1411 / JCM 8866 / NBRC 14739 / NCIMB 2177 / R-4) (Halobacterium mediterranei).